A 316-amino-acid polypeptide reads, in one-letter code: 4-hydroxy-3-methylbut-2-enyl diphosphate reductase (316 aa).

Cys12 serves as a coordination point for [4Fe-4S] cluster. Residues His41 and His74 each contribute to the (2E)-4-hydroxy-3-methylbut-2-enyl diphosphate site. Dimethylallyl diphosphate-binding residues include His41 and His74. Positions 41 and 74 each coordinate isopentenyl diphosphate. Cys96 serves as a coordination point for [4Fe-4S] cluster. His124 is a (2E)-4-hydroxy-3-methylbut-2-enyl diphosphate binding site. Residue His124 coordinates dimethylallyl diphosphate. His124 contacts isopentenyl diphosphate. Catalysis depends on Glu126, which acts as the Proton donor. Thr167 lines the (2E)-4-hydroxy-3-methylbut-2-enyl diphosphate pocket. Position 197 (Cys197) interacts with [4Fe-4S] cluster. Residues Ser225, Ser226, Asn227, and Ser269 each coordinate (2E)-4-hydroxy-3-methylbut-2-enyl diphosphate. The dimethylallyl diphosphate site is built by Ser225, Ser226, Asn227, and Ser269. Isopentenyl diphosphate is bound by residues Ser225, Ser226, Asn227, and Ser269.

It belongs to the IspH family. Homodimer. [4Fe-4S] cluster is required as a cofactor.

The enzyme catalyses isopentenyl diphosphate + 2 oxidized [2Fe-2S]-[ferredoxin] + H2O = (2E)-4-hydroxy-3-methylbut-2-enyl diphosphate + 2 reduced [2Fe-2S]-[ferredoxin] + 2 H(+). It catalyses the reaction dimethylallyl diphosphate + 2 oxidized [2Fe-2S]-[ferredoxin] + H2O = (2E)-4-hydroxy-3-methylbut-2-enyl diphosphate + 2 reduced [2Fe-2S]-[ferredoxin] + 2 H(+). The protein operates within isoprenoid biosynthesis; dimethylallyl diphosphate biosynthesis; dimethylallyl diphosphate from (2E)-4-hydroxy-3-methylbutenyl diphosphate: step 1/1. It functions in the pathway isoprenoid biosynthesis; isopentenyl diphosphate biosynthesis via DXP pathway; isopentenyl diphosphate from 1-deoxy-D-xylulose 5-phosphate: step 6/6. Catalyzes the conversion of 1-hydroxy-2-methyl-2-(E)-butenyl 4-diphosphate (HMBPP) into a mixture of isopentenyl diphosphate (IPP) and dimethylallyl diphosphate (DMAPP). Acts in the terminal step of the DOXP/MEP pathway for isoprenoid precursor biosynthesis. In Salmonella paratyphi B (strain ATCC BAA-1250 / SPB7), this protein is 4-hydroxy-3-methylbut-2-enyl diphosphate reductase.